Here is a 149-residue protein sequence, read N- to C-terminus: Hydrogenase expression/formation protein HupT (149 aa).

This sequence belongs to the HupJ family.

The sequence is that of Hydrogenase expression/formation protein HupT (hupT) from Azotobacter chroococcum mcd 1.